Reading from the N-terminus, the 316-residue chain is Transaldolase A (316 aa).

Catalysis depends on lysine 131, which acts as the Schiff-base intermediate with substrate.

It belongs to the transaldolase family. Type 1 subfamily. Homodimer.

The protein localises to the cytoplasm. It carries out the reaction D-sedoheptulose 7-phosphate + D-glyceraldehyde 3-phosphate = D-erythrose 4-phosphate + beta-D-fructose 6-phosphate. It functions in the pathway carbohydrate degradation; pentose phosphate pathway; D-glyceraldehyde 3-phosphate and beta-D-fructose 6-phosphate from D-ribose 5-phosphate and D-xylulose 5-phosphate (non-oxidative stage): step 2/3. Transaldolase is important for the balance of metabolites in the pentose-phosphate pathway. The chain is Transaldolase A from Shigella flexneri.